The following is a 7031-amino-acid chain: Extracellular matrix-binding protein EbhB (7031 aa).

An N-terminal signal peptide occupies residues 1–39; the sequence is MNYRDKIQKFSIRKYTVGTFSTVIATLVFLGFNTSQAHA. The span at 41–59 shows a compositional bias: polar residues; sequence ETNQPASVVKQKQQSNNEQ. 5 disordered regions span residues 41-86, 99-152, 250-277, 1342-1373, and 2418-2438; these read ETNQ…HENE, KVAQ…GNDN, PQRQ…PRSV, NNIT…ATTD, and TITP…TLTA. The span at 65–80 shows a compositional bias: low complexity; sequence SQVQNSQNSQNGQSLS. Polar residues predominate over residues 99-117; that stretch reads KVAQSSTTNDEQPASQNVN. The segment covering 130 to 140 has biased composition (basic and acidic residues); the sequence is PDKEQSKHKQN. Polar residues-rich tracts occupy residues 141-151, 250-266, 1360-1373, and 2427-2438; these read ESQSANKNGND, PQRQ…QTRS, FRTT…ATTD, and HSVSSNPSTLTA. 38 FIVAR domains span residues 2524-2580, 2610-2666, 2687-2750, 2780-2836, 2864-2919, 2947-3002, 3030-3085, 3154-3212, 3280-3339, 3407-3465, 3533-3591, 3659-3717, 3785-3843, 3911-3969, 4037-4095, 4163-4221, 4289-4347, 4415-4473, 4541-4599, 4667-4725, 4793-4851, 4919-4977, 5045-5103, 5171-5229, 5297-5355, 5423-5481, 5549-5607, 5675-5733, 5801-5859, 5927-5985, 6053-6111, 6179-6236, 6304-6362, 6430-6488, 6556-6614, 6682-6740, 6818-6866, and 6934-6992; these read AKNH…VSDA, SKNN…ISDE, DTHA…VQSA, AKTK…IAAE, AKTQ…IRQN, AKNQ…INTN, AKTQ…INDK, AMTK…VNQK, AMTG…VNNA, AMGN…VNRA, AMGN…VTEA, AMNT…ITQK, AMAS…VEAA, AMGN…VEQA, AMGT…VTAA, AMKG…ITQA, QMGN…VEAA, AMAN…VENA, AMGT…INQI, AMGQ…VDRA, AMNS…VDNA, AMGA…INGM, AMTA…VNSA, AMKG…ITQV, AMHS…VEQA, AMGQ…VERA, AMTA…VTNA, AMKG…INQA, AMTN…VETA, AMSN…VEQA, AMNQ…INQK, AMGN…VQAA, AMGQ…VEAA, AMQR…VEQA, AMDQ…VTAA, AMNQ…VTQA, DKDQ…VEAA, and AMGN…VEAA.

This chain is Extracellular matrix-binding protein EbhB (ebhB), found in Staphylococcus aureus (strain Newman).